Reading from the N-terminus, the 104-residue chain is uncharacterized protein (104 aa).

Positions 1 to 25 (MVSSFFMASTLLAISSCFNSSISRA) are cleaved as a signal peptide. The chain crosses the membrane as a helical span at residues 79–99 (IPVVIVVEISSTLVLLLSAFL).

The protein localises to the membrane. This is an uncharacterized protein from Saccharomyces cerevisiae (strain ATCC 204508 / S288c) (Baker's yeast).